Here is a 180-residue protein sequence, read N- to C-terminus: Cell division protein ZapC (180 aa).

This sequence belongs to the ZapC family. Interacts directly with FtsZ.

The protein resides in the cytoplasm. Contributes to the efficiency of the cell division process by stabilizing the polymeric form of the cell division protein FtsZ. Acts by promoting interactions between FtsZ protofilaments and suppressing the GTPase activity of FtsZ. The polypeptide is Cell division protein ZapC (Vibrio vulnificus (strain CMCP6)).